Here is a 372-residue protein sequence, read N- to C-terminus: DNA replication and repair protein RecF (372 aa).

30–37 (GENGQGKT) contributes to the ATP binding site.

The protein belongs to the RecF family.

It is found in the cytoplasm. The RecF protein is involved in DNA metabolism; it is required for DNA replication and normal SOS inducibility. RecF binds preferentially to single-stranded, linear DNA. It also seems to bind ATP. This Anaeromyxobacter dehalogenans (strain 2CP-C) protein is DNA replication and repair protein RecF.